Here is an 84-residue protein sequence, read N- to C-terminus: Beta-cardiotoxin CTX14 (84 aa).

The N-terminal stretch at 1 to 21 (MKTLLLTLVVVTIVCLDLGYT) is a signal peptide. 4 disulfides stabilise this stretch: Cys-24–Cys-43, Cys-36–Cys-61, Cys-65–Cys-76, and Cys-77–Cys-82.

It belongs to the three-finger toxin family. Short-chain subfamily. Aminergic toxin sub-subfamily. In terms of tissue distribution, expressed by the venom gland.

The protein resides in the secreted. Functionally, acts as a beta-blocker by binding to beta-1 and beta-2 adrenergic receptors (ADRB1 and ADRB2). It dose-dependently decreases the heart rate (bradycardia), whereas conventional cardiotoxins increases it. At 100 mg/kg, intraperitoneal injection into mice provokes labored breathing, impaired locomotion, lack of response to external stimuli, and death (after 30 minutes). The polypeptide is Beta-cardiotoxin CTX14 (Ophiophagus hannah (King cobra)).